We begin with the raw amino-acid sequence, 802 residues long: Peptidyl serine alpha-galactosyltransferase (802 aa).

Residues 1–19 form the signal peptide; that stretch reads MRWDLITAIVAALVVSVLA. Residues 20–750 are Extracellular-facing; that stretch reads DESGQMAPYR…SEGRFSTLKL (731 aa). Residues asparagine 214, asparagine 275, asparagine 425, and asparagine 637 are each glycosylated (N-linked (GlcNAc...) asparagine). A disordered region spans residues 699-741; that stretch reads RNCPEPGSESTEKISVSRKVGNIETKQTQGSDETKESSGSSES. A helical membrane pass occupies residues 751 to 771; sequence WVIALWLISGVGFLVVMLLVF. At 772–802 the chain is on the cytoplasmic side; it reads STRRGRGTTRGKGYRNKRRTSYSNTGFLDTK. Residues 777–791 are compositionally biased toward basic residues; sequence RGTTRGKGYRNKRRT. Residues 777-802 are disordered; sequence RGTTRGKGYRNKRRTSYSNTGFLDTK. Positions 792-802 are enriched in polar residues; the sequence is SYSNTGFLDTK.

It is found in the endoplasmic reticulum membrane. Its function is as follows. Glycosyltransferase involved in the O-galactosylation of several proteins including extensins. Catalyzes the transfer of alpha-galactosyl to Ser residues. Hydroxylation of proline residues adjacent to the serine acceptor is required for activity. The sequence is that of Peptidyl serine alpha-galactosyltransferase from Arabidopsis thaliana (Mouse-ear cress).